The following is a 66-amino-acid chain: Large ribosomal subunit protein bL35 (66 aa).

Belongs to the bacterial ribosomal protein bL35 family.

The polypeptide is Large ribosomal subunit protein bL35 (Acholeplasma laidlawii (strain PG-8A)).